The chain runs to 813 residues: UPF0508 protein KLLA0A06237g (813 aa).

A disordered region spans residues 478–537 (KKDKSKSQKNSTDSLAKLSDTKSIHPPESAMSSHASTPSSTSKSSKSSKSSSTLSPSTCK). A compositionally biased stretch (low complexity) spans 506-537 (SAMSSHASTPSSTSKSSKSSKSSSTLSPSTCK).

This sequence belongs to the UPF0508 family.

This is UPF0508 protein KLLA0A06237g from Kluyveromyces lactis (strain ATCC 8585 / CBS 2359 / DSM 70799 / NBRC 1267 / NRRL Y-1140 / WM37) (Yeast).